Here is a 252-residue protein sequence, read N- to C-terminus: Ubiquinone/menaquinone biosynthesis C-methyltransferase UbiE (252 aa).

S-adenosyl-L-methionine contacts are provided by residues T71, D100, 124 to 125 (DA), and S141.

It belongs to the class I-like SAM-binding methyltransferase superfamily. MenG/UbiE family.

The catalysed reaction is a 2-demethylmenaquinol + S-adenosyl-L-methionine = a menaquinol + S-adenosyl-L-homocysteine + H(+). It carries out the reaction a 2-methoxy-6-(all-trans-polyprenyl)benzene-1,4-diol + S-adenosyl-L-methionine = a 5-methoxy-2-methyl-3-(all-trans-polyprenyl)benzene-1,4-diol + S-adenosyl-L-homocysteine + H(+). It participates in quinol/quinone metabolism; menaquinone biosynthesis; menaquinol from 1,4-dihydroxy-2-naphthoate: step 2/2. Its pathway is cofactor biosynthesis; ubiquinone biosynthesis. Functionally, methyltransferase required for the conversion of demethylmenaquinol (DMKH2) to menaquinol (MKH2) and the conversion of 2-polyprenyl-6-methoxy-1,4-benzoquinol (DDMQH2) to 2-polyprenyl-3-methyl-6-methoxy-1,4-benzoquinol (DMQH2). The polypeptide is Ubiquinone/menaquinone biosynthesis C-methyltransferase UbiE (Caulobacter vibrioides (strain ATCC 19089 / CIP 103742 / CB 15) (Caulobacter crescentus)).